The following is a 296-amino-acid chain: Probable 6-phosphogluconolactonase 1 (296 aa).

The protein belongs to the glucosamine/galactosamine-6-phosphate isomerase family. 6-phosphogluconolactonase subfamily.

The catalysed reaction is 6-phospho-D-glucono-1,5-lactone + H2O = 6-phospho-D-gluconate + H(+). It functions in the pathway carbohydrate degradation; pentose phosphate pathway; D-ribulose 5-phosphate from D-glucose 6-phosphate (oxidative stage): step 2/3. Its function is as follows. Hydrolysis of 6-phosphogluconolactone to 6-phosphogluconate. In Oryza sativa subsp. japonica (Rice), this protein is Probable 6-phosphogluconolactonase 1.